A 173-amino-acid chain; its full sequence is Adenine phosphoribosyltransferase (173 aa).

It belongs to the purine/pyrimidine phosphoribosyltransferase family. As to quaternary structure, homodimer.

The protein localises to the cytoplasm. It carries out the reaction AMP + diphosphate = 5-phospho-alpha-D-ribose 1-diphosphate + adenine. The protein operates within purine metabolism; AMP biosynthesis via salvage pathway; AMP from adenine: step 1/1. Catalyzes a salvage reaction resulting in the formation of AMP, that is energically less costly than de novo synthesis. The polypeptide is Adenine phosphoribosyltransferase (Listeria monocytogenes serotype 4b (strain CLIP80459)).